The sequence spans 94 residues: Phosphoribosyl-ATP pyrophosphatase (94 aa).

It belongs to the PRA-PH family.

The protein localises to the cytoplasm. It carries out the reaction 1-(5-phospho-beta-D-ribosyl)-ATP + H2O = 1-(5-phospho-beta-D-ribosyl)-5'-AMP + diphosphate + H(+). It functions in the pathway amino-acid biosynthesis; L-histidine biosynthesis; L-histidine from 5-phospho-alpha-D-ribose 1-diphosphate: step 2/9. The polypeptide is Phosphoribosyl-ATP pyrophosphatase (Pyrobaculum neutrophilum (strain DSM 2338 / JCM 9278 / NBRC 100436 / V24Sta) (Thermoproteus neutrophilus)).